A 226-amino-acid polypeptide reads, in one-letter code: VEKVIPGSAAEKAGLQKGDRIVKVGSQEIDVWHTFTSFVSNNPNVPLELSVDRAGHIISLSMTPEVRQQSGGRKVGFAGVELRIVPLADEYKIVQQYGPFSAMYQAGDKTWQLMRLTVSMIGKLIVGDVKINNLSGPISIAKGAGVSADSGLVYYLMFLALISVNLGIINLIPLPVLDGGHLLFLFIEKIKGGPVSERVQDFSYRIGAMILVLLMGLALFNDFSRF.

The 56-residue stretch at 1-56 (VEKVIPGSAAEKAGLQKGDRIVKVGSQEIDVWHTFTSFVSNNPNVPLELSVDRAGH) folds into the PDZ domain. Transmembrane regions (helical) follow at residues 152–174 (LVYYLMFLALISVNLGIINLIPL) and 202–221 (FSYRIGAMILVLLMGLALFN).

This sequence belongs to the peptidase M50B family. In terms of assembly, interacts with RseA. Requires Zn(2+) as cofactor.

Its subcellular location is the cell inner membrane. A site-2 regulated intramembrane protease (S2P) that cleaves the peptide bond between 'Ala-108' and 'Cys-109' in the transmembrane region of RseA. Part of a regulated intramembrane proteolysis (RIP) cascade. Acts on DegS-cleaved RseA to release the cytoplasmic domain of RseA. This provides the cell with sigma-E (RpoE) activity through the proteolysis of RseA. This chain is Protease RseP (rseP), found in Photorhabdus luminescens (Xenorhabdus luminescens).